We begin with the raw amino-acid sequence, 315 residues long: 4-hydroxy-3-methylbut-2-enyl diphosphate reductase (315 aa).

Cys12 provides a ligand contact to [4Fe-4S] cluster. (2E)-4-hydroxy-3-methylbut-2-enyl diphosphate contacts are provided by His41 and His74. Residues His41 and His74 each coordinate dimethylallyl diphosphate. Positions 41 and 74 each coordinate isopentenyl diphosphate. Cys96 lines the [4Fe-4S] cluster pocket. His124 contributes to the (2E)-4-hydroxy-3-methylbut-2-enyl diphosphate binding site. His124 serves as a coordination point for dimethylallyl diphosphate. His124 provides a ligand contact to isopentenyl diphosphate. Catalysis depends on Glu126, which acts as the Proton donor. A (2E)-4-hydroxy-3-methylbut-2-enyl diphosphate-binding site is contributed by Thr168. A [4Fe-4S] cluster-binding site is contributed by Cys198. The (2E)-4-hydroxy-3-methylbut-2-enyl diphosphate site is built by Ser226, Ser227, Asn228, and Ser270. Residues Ser226, Ser227, Asn228, and Ser270 each coordinate dimethylallyl diphosphate. 4 residues coordinate isopentenyl diphosphate: Ser226, Ser227, Asn228, and Ser270.

The protein belongs to the IspH family. [4Fe-4S] cluster is required as a cofactor.

The enzyme catalyses isopentenyl diphosphate + 2 oxidized [2Fe-2S]-[ferredoxin] + H2O = (2E)-4-hydroxy-3-methylbut-2-enyl diphosphate + 2 reduced [2Fe-2S]-[ferredoxin] + 2 H(+). It catalyses the reaction dimethylallyl diphosphate + 2 oxidized [2Fe-2S]-[ferredoxin] + H2O = (2E)-4-hydroxy-3-methylbut-2-enyl diphosphate + 2 reduced [2Fe-2S]-[ferredoxin] + 2 H(+). Its pathway is isoprenoid biosynthesis; dimethylallyl diphosphate biosynthesis; dimethylallyl diphosphate from (2E)-4-hydroxy-3-methylbutenyl diphosphate: step 1/1. It functions in the pathway isoprenoid biosynthesis; isopentenyl diphosphate biosynthesis via DXP pathway; isopentenyl diphosphate from 1-deoxy-D-xylulose 5-phosphate: step 6/6. Catalyzes the conversion of 1-hydroxy-2-methyl-2-(E)-butenyl 4-diphosphate (HMBPP) into a mixture of isopentenyl diphosphate (IPP) and dimethylallyl diphosphate (DMAPP). Acts in the terminal step of the DOXP/MEP pathway for isoprenoid precursor biosynthesis. This is 4-hydroxy-3-methylbut-2-enyl diphosphate reductase from Azotobacter vinelandii (strain DJ / ATCC BAA-1303).